The primary structure comprises 128 residues: Protein ApaG (128 aa).

One can recognise an ApaG domain in the interval 1 to 123 (MTSSPDITVS…FRLDIAPESG (123 aa)).

The sequence is that of Protein ApaG from Deinococcus radiodurans (strain ATCC 13939 / DSM 20539 / JCM 16871 / CCUG 27074 / LMG 4051 / NBRC 15346 / NCIMB 9279 / VKM B-1422 / R1).